The sequence spans 322 residues: Undecaprenyl-phosphate 4-deoxy-4-formamido-L-arabinose transferase (322 aa).

The Cytoplasmic portion of the chain corresponds to 1-235 (MFEIHPVKKV…TCLTTTPLRM (235 aa)). Residues 236 to 256 (LSLLGSIIAIGGFSIAVLLVI) traverse the membrane as a helical segment. Residues 257–269 (LRLTFGPQWAAEG) lie on the Periplasmic side of the membrane. The helical transmembrane segment at 270–290 (VFMLFAVLFTFIGAQFIGMGL) threads the bilayer. Over 291-322 (LGEYIGRIYTDVRARPRYFVQQVIRPSSKENE) the chain is Cytoplasmic.

This sequence belongs to the glycosyltransferase 2 family.

It is found in the cell inner membrane. The catalysed reaction is UDP-4-deoxy-4-formamido-beta-L-arabinose + di-trans,octa-cis-undecaprenyl phosphate = 4-deoxy-4-formamido-alpha-L-arabinopyranosyl di-trans,octa-cis-undecaprenyl phosphate + UDP. It functions in the pathway glycolipid biosynthesis; 4-amino-4-deoxy-alpha-L-arabinose undecaprenyl phosphate biosynthesis; 4-amino-4-deoxy-alpha-L-arabinose undecaprenyl phosphate from UDP-4-deoxy-4-formamido-beta-L-arabinose and undecaprenyl phosphate: step 1/2. It participates in bacterial outer membrane biogenesis; lipopolysaccharide biosynthesis. Its function is as follows. Catalyzes the transfer of 4-deoxy-4-formamido-L-arabinose from UDP to undecaprenyl phosphate. The modified arabinose is attached to lipid A and is required for resistance to polymyxin and cationic antimicrobial peptides. The polypeptide is Undecaprenyl-phosphate 4-deoxy-4-formamido-L-arabinose transferase (Escherichia coli O157:H7 (strain EC4115 / EHEC)).